Reading from the N-terminus, the 286-residue chain is Transcriptional regulator of yeast form adherence 4 (286 aa).

2 stretches are compositionally biased toward low complexity: residues 1–29 (MSLP…PPSS) and 37–65 (LSTS…TTTN). A disordered region spans residues 1–71 (MSLPMSPVSP…TTTNYGTKTP (71 aa)). C2H2-type zinc fingers lie at residues 78-101 (FNCT…LSTH) and 107-130 (FTCG…KNLH). Residues 146 to 260 (HCNKDNDSKS…ITNSSTSHIH (115 aa)) are disordered. Low complexity-rich tracts occupy residues 156–165 (GSDSNTNKTN) and 228–244 (SVPS…PTST). Residues 245 to 260 (NNDTASITNSSTSHIH) are compositionally biased toward polar residues.

The protein resides in the nucleus. In terms of biological role, transcription factor required for yeast cell adherence to silicone substrate. In Candida albicans (strain SC5314 / ATCC MYA-2876) (Yeast), this protein is Transcriptional regulator of yeast form adherence 4 (TRY4).